A 79-amino-acid polypeptide reads, in one-letter code: Small ribosomal subunit protein bS18 (79 aa).

This sequence belongs to the bacterial ribosomal protein bS18 family. As to quaternary structure, part of the 30S ribosomal subunit. Forms a tight heterodimer with protein bS6.

Functionally, binds as a heterodimer with protein bS6 to the central domain of the 16S rRNA, where it helps stabilize the platform of the 30S subunit. The chain is Small ribosomal subunit protein bS18 from Rhodopseudomonas palustris (strain HaA2).